Reading from the N-terminus, the 352-residue chain is uncharacterized protein (352 aa).

To M.pneumoniae MPN_633 (in the N-terminal section), and M.pneumoniae MPN_634 (in the C-terminal section).

This is an uncharacterized protein from Mycoplasma pneumoniae (strain ATCC 29342 / M129 / Subtype 1) (Mycoplasmoides pneumoniae).